The following is a 483-amino-acid chain: Regulatory protein ViaA (483 aa).

Belongs to the ViaA family. In terms of assembly, homodimer. Interacts with RavA.

The protein resides in the cytoplasm. In terms of biological role, component of the RavA-ViaA chaperone complex, which may act on the membrane to optimize the function of some of the respiratory chains. ViaA stimulates the ATPase activity of RavA. The chain is Regulatory protein ViaA from Salmonella agona (strain SL483).